The primary structure comprises 507 residues: ATP synthase subunit alpha, chloroplastic (507 aa).

170–177 (GDRQTGKT) contacts ATP.

It belongs to the ATPase alpha/beta chains family. F-type ATPases have 2 components, CF(1) - the catalytic core - and CF(0) - the membrane proton channel. CF(1) has five subunits: alpha(3), beta(3), gamma(1), delta(1), epsilon(1). CF(0) has four main subunits: a, b, b' and c.

The protein localises to the plastid. Its subcellular location is the chloroplast thylakoid membrane. The enzyme catalyses ATP + H2O + 4 H(+)(in) = ADP + phosphate + 5 H(+)(out). In terms of biological role, produces ATP from ADP in the presence of a proton gradient across the membrane. The alpha chain is a regulatory subunit. This Liriodendron tulipifera (Tuliptree) protein is ATP synthase subunit alpha, chloroplastic.